We begin with the raw amino-acid sequence, 73 residues long: Omega-hexatoxin-Ar1b (73 aa).

Positions Met-1–Ala-22 are cleaved as a signal peptide. A propeptide spanning residues Gly-23–Arg-37 is cleaved from the precursor. Cystine bridges form between Cys-40/Cys-54, Cys-47/Cys-58, and Cys-53/Cys-72.

This sequence belongs to the neurotoxin 08 (Shiva) family. 01 (omega toxin) subfamily. As to expression, expressed by the venom gland.

It is found in the secreted. In terms of biological role, insecticidal toxin that reversibly and voltage-independently blocks both mid-low- (M-LVA) and high-voltage-activated (HVA) calcium channels (Cav) in cockroach DUM neurons. Also causes a modest block of insect sodium channel currents (Nav). Induces potent excitatory symptoms, followed by flaccid paralysis leading to death in house crickets. The sequence is that of Omega-hexatoxin-Ar1b from Atrax robustus (Sydney funnel-web spider).